Consider the following 372-residue polypeptide: RNA polymerase sigma factor SigA (372 aa).

A sigma-70 factor domain-2 region spans residues 139 to 209 (LAEANLRLVV…TRAIADQART (71 aa)). The short motif at 163–166 (DLIQ) is the Interaction with polymerase core subunit RpoC element. The segment at 218 to 294 (ETINKLIRVQ…DQDALAPSDA (77 aa)) is sigma-70 factor domain-3. A sigma-70 factor domain-4 region spans residues 307–360 (VLDTLTDREENVLRLRFGLDDGRTRTLEEVGKVFGVTRERIRQIEAKALRKLRH). Residues 333–352 (LEEVGKVFGVTRERIRQIEA) constitute a DNA-binding region (H-T-H motif).

It belongs to the sigma-70 factor family. RpoD/SigA subfamily. In terms of assembly, interacts transiently with the RNA polymerase catalytic core.

It localises to the cytoplasm. Sigma factors are initiation factors that promote the attachment of RNA polymerase to specific initiation sites and are then released. This sigma factor is the primary sigma factor during exponential growth. The chain is RNA polymerase sigma factor SigA from Halalkalibacterium halodurans (strain ATCC BAA-125 / DSM 18197 / FERM 7344 / JCM 9153 / C-125) (Bacillus halodurans).